The following is a 101-amino-acid chain: YcgL domain-containing protein ABBFA_001807 (101 aa).

In terms of domain architecture, YcgL spans 1 to 92 (MHCDIYRSSK…PPEGLINPNA (92 aa)).

The polypeptide is YcgL domain-containing protein ABBFA_001807 (Acinetobacter baumannii (strain AB307-0294)).